The following is an 812-amino-acid chain: E3 UFM1-protein ligase 1 homolog (812 aa).

A disordered region spans residues 389–495 (IKHSAGQGKP…KTKEDNTNIF (107 aa)). 2 stretches are compositionally biased toward basic and acidic residues: residues 403-415 (SEHRIGSDGKDLG) and 475-491 (DAKHGGKKASEKTKEDN).

Belongs to the UFL1 family.

In terms of biological role, E3 UFM1-protein ligase that mediates ufmylation of target proteins. This Oryza sativa subsp. indica (Rice) protein is E3 UFM1-protein ligase 1 homolog.